Consider the following 99-residue polypeptide: Large ribosomal subunit protein bL27 (99 aa).

Residues 13–65 form a disordered region; the sequence is AHHKGGGSTTNGRNSAGRRLGAKRADGQEVHAGSIIYRQRGTKIHPGKNVGRG.

The protein belongs to the bacterial ribosomal protein bL27 family.

The chain is Large ribosomal subunit protein bL27 from Lactobacillus delbrueckii subsp. bulgaricus (strain ATCC BAA-365 / Lb-18).